We begin with the raw amino-acid sequence, 89 residues long: NAD(P)H-quinone oxidoreductase subunit L (89 aa).

The next 2 helical transmembrane spans lie at 29 to 46 (VLGG…FYWM) and 59 to 79 (LFIY…APFL).

It belongs to the complex I NdhL subunit family. In terms of assembly, NDH-1 can be composed of about 15 different subunits; different subcomplexes with different compositions have been identified which probably have different functions.

The protein resides in the cellular thylakoid membrane. The enzyme catalyses a plastoquinone + NADH + (n+1) H(+)(in) = a plastoquinol + NAD(+) + n H(+)(out). It carries out the reaction a plastoquinone + NADPH + (n+1) H(+)(in) = a plastoquinol + NADP(+) + n H(+)(out). In terms of biological role, NDH-1 shuttles electrons from an unknown electron donor, via FMN and iron-sulfur (Fe-S) centers, to quinones in the respiratory and/or the photosynthetic chain. The immediate electron acceptor for the enzyme in this species is believed to be plastoquinone. Couples the redox reaction to proton translocation, and thus conserves the redox energy in a proton gradient. Cyanobacterial NDH-1 also plays a role in inorganic carbon-concentration. The protein is NAD(P)H-quinone oxidoreductase subunit L of Prochlorococcus marinus (strain NATL1A).